The primary structure comprises 509 residues: Seipin-3 (509 aa).

The tract at residues 33 to 73 (YDCLNSSPPANLRRRRLPMDTDSSSSSSTSSLESCEKRSTV) is disordered. Residues 52–63 (DTDSSSSSSTSS) are compositionally biased toward low complexity. A run of 2 helical transmembrane segments spans residues 238 to 258 (LFCAVYVGIMLFALLVSAFMI) and 455 to 475 (LFVWISMSLFIMELLFALVFF).

Belongs to the seipin family. Expressed in seeds, seedlings, leaves, stems and roots. Not detected in flowers.

It is found in the endoplasmic reticulum membrane. In terms of biological role, involved in lipid metabolism and lipid droplet (LD) morphology, number, and size. Supports the formation of small-sized LDs and modulates triacylglycerol accumulation. Induces probably a reorganization of the endoplasmic reticulum into LD-forming domains. The sequence is that of Seipin-3 from Arabidopsis thaliana (Mouse-ear cress).